Here is a 379-residue protein sequence, read N- to C-terminus: 1-deoxy-D-xylulose 5-phosphate reductoisomerase (379 aa).

The NADPH site is built by Thr-10, Gly-11, Ser-12, Ile-13, Gly-36, Asn-38, and Asn-121. Lys-122 is a 1-deoxy-D-xylulose 5-phosphate binding site. Position 123 (Glu-123) interacts with NADPH. Position 147 (Asp-147) interacts with Mn(2+). 1-deoxy-D-xylulose 5-phosphate is bound by residues Ser-148, Glu-149, Ser-173, and His-196. Glu-149 contacts Mn(2+). Gly-202 lines the NADPH pocket. Ser-209, Asn-214, Lys-215, and Glu-218 together coordinate 1-deoxy-D-xylulose 5-phosphate. Glu-218 contacts Mn(2+).

It belongs to the DXR family. Mg(2+) serves as cofactor. Requires Mn(2+) as cofactor.

It catalyses the reaction 2-C-methyl-D-erythritol 4-phosphate + NADP(+) = 1-deoxy-D-xylulose 5-phosphate + NADPH + H(+). The protein operates within isoprenoid biosynthesis; isopentenyl diphosphate biosynthesis via DXP pathway; isopentenyl diphosphate from 1-deoxy-D-xylulose 5-phosphate: step 1/6. In terms of biological role, catalyzes the NADPH-dependent rearrangement and reduction of 1-deoxy-D-xylulose-5-phosphate (DXP) to 2-C-methyl-D-erythritol 4-phosphate (MEP). This is 1-deoxy-D-xylulose 5-phosphate reductoisomerase from Shouchella clausii (strain KSM-K16) (Alkalihalobacillus clausii).